The primary structure comprises 432 residues: 3-phosphoshikimate 1-carboxyvinyltransferase (432 aa).

Lys-23, Ser-24, and Arg-28 together coordinate 3-phosphoshikimate. Lys-23 contacts phosphoenolpyruvate. Residues Gly-95 and Arg-123 each contribute to the phosphoenolpyruvate site. Ser-167, Gln-169, Asp-317, and Lys-344 together coordinate 3-phosphoshikimate. A phosphoenolpyruvate-binding site is contributed by Gln-169. The active-site Proton acceptor is the Asp-317. Phosphoenolpyruvate is bound by residues Arg-348 and Arg-390.

The protein belongs to the EPSP synthase family. In terms of assembly, monomer.

The protein localises to the cytoplasm. It carries out the reaction 3-phosphoshikimate + phosphoenolpyruvate = 5-O-(1-carboxyvinyl)-3-phosphoshikimate + phosphate. Its pathway is metabolic intermediate biosynthesis; chorismate biosynthesis; chorismate from D-erythrose 4-phosphate and phosphoenolpyruvate: step 6/7. Its function is as follows. Catalyzes the transfer of the enolpyruvyl moiety of phosphoenolpyruvate (PEP) to the 5-hydroxyl of shikimate-3-phosphate (S3P) to produce enolpyruvyl shikimate-3-phosphate and inorganic phosphate. This chain is 3-phosphoshikimate 1-carboxyvinyltransferase, found in Staphylococcus aureus (strain COL).